Here is a 377-residue protein sequence, read N- to C-terminus: Prostaglandin E synthase 2 (377 aa).

Residues 1–65 (MAAACTRTLG…LAAPVRGSGR (65 aa)) lie on the Lumenal side of the membrane. The chain crosses the membrane as a helical span at residues 66 to 83 (VLGCAFLLGGGFGLYQTI). The region spanning 105–182 (LKLTLYQYKT…ALKTYISSKD (78 aa)) is the GST N-terminal domain. Glutathione contacts are provided by residues Val153 and 166–167 (DS). Residues 266-377 (YIVREGKFGS…RMQKATQHVS (112 aa)) enclose the GST C-terminal domain.

This sequence belongs to the GST superfamily. In terms of assembly, homodimer.

The protein localises to the golgi apparatus membrane. It carries out the reaction prostaglandin H2 = prostaglandin E2. It catalyses the reaction prostaglandin H2 = (12S)-hydroxy-(5Z,8E,10E)-heptadecatrienoate + malonaldehyde. The protein operates within lipid metabolism; prostaglandin biosynthesis. With respect to regulation, isomerase activity is increased by sulfhydril compounds. Dithiothreitol (DTT) is most effective, followed by glutathione (GSH) and 2-mercaptoethanol. Isomerase that catalyzes the conversion of PGH2 into the more stable prostaglandin E2 (PGE2) (in vitro). The biological function and the GSH-dependent property of PTGES2 is still under debate. In vivo, PTGES2 could form a complex with GSH and heme and would not participate in PGE2 synthesis but would catalyze the degradation of prostaglandin E2 H2 (PGH2) to 12(S)-hydroxy-5(Z),8(E),10(E)-heptadecatrienoic acid (HHT) and malondialdehyde (MDA). The protein is Prostaglandin E synthase 2 (ptges2) of Danio rerio (Zebrafish).